The following is a 134-amino-acid chain: uncharacterized protein (134 aa).

It belongs to the ycf68 family.

Its subcellular location is the plastid. The protein localises to the chloroplast. This is an uncharacterized protein from Saccharum hybrid (Sugarcane).